The chain runs to 340 residues: Probable tRNA pseudouridine synthase B (340 aa).

The active-site Nucleophile is the Asp-82. Residues 250 to 325 form the PUA domain; that stretch reads LPKVWIKDSA…IAVDVEKVFM (76 aa).

It belongs to the pseudouridine synthase TruB family. Type 2 subfamily.

The catalysed reaction is uridine(55) in tRNA = pseudouridine(55) in tRNA. Its function is as follows. Could be responsible for synthesis of pseudouridine from uracil-55 in the psi GC loop of transfer RNAs. In Pyrococcus furiosus (strain ATCC 43587 / DSM 3638 / JCM 8422 / Vc1), this protein is Probable tRNA pseudouridine synthase B.